Here is a 276-residue protein sequence, read N- to C-terminus: Kallikrein-10 (276 aa).

The first 30 residues, M1–A30, serve as a signal peptide directing secretion. The N-linked (GlcNAc...) asparagine glycan is linked to N39. The region spanning A47–R274 is the Peptidase S1 domain. Intrachain disulfides connect C52–C162, C71–C87, C169–C235, C201–C215, and C225–C250. Residues H86 and D137 each act as charge relay system in the active site. Catalysis depends on S229, which acts as the Charge relay system.

It belongs to the peptidase S1 family. Kallikrein subfamily. In terms of tissue distribution, expressed in breast, ovary and prostate.

The protein resides in the secreted. Functionally, has a tumor-suppressor role for NES1 in breast and prostate cancer. The protein is Kallikrein-10 (KLK10) of Homo sapiens (Human).